The sequence spans 342 residues: UDP-3-O-(3-hydroxymyristoyl)glucosamine N-acyltransferase (342 aa).

Histidine 239 serves as the catalytic Proton acceptor.

Belongs to the transferase hexapeptide repeat family. LpxD subfamily. In terms of assembly, homotrimer.

It catalyses the reaction a UDP-3-O-[(3R)-3-hydroxyacyl]-alpha-D-glucosamine + a (3R)-hydroxyacyl-[ACP] = a UDP-2-N,3-O-bis[(3R)-3-hydroxyacyl]-alpha-D-glucosamine + holo-[ACP] + H(+). The enzyme catalyses UDP-3-O-[(3R)-3-hydroxytetradecanoyl]-alpha-D-glucosamine + (3R)-hydroxytetradecanoyl-[ACP] = UDP-2-N,3-O-bis[(3R)-3-hydroxytetradecanoyl]-alpha-D-glucosamine + holo-[ACP] + H(+). Its pathway is glycolipid biosynthesis; lipid IV(A) biosynthesis; lipid IV(A) from (3R)-3-hydroxytetradecanoyl-[acyl-carrier-protein] and UDP-N-acetyl-alpha-D-glucosamine: step 3/6. Catalyzes the N-acylation of UDP-3-O-(hydroxytetradecanoyl)glucosamine using 3-hydroxytetradecanoyl-ACP as the acyl donor. Is involved in the biosynthesis of lipid A, a phosphorylated glycolipid that anchors the lipopolysaccharide to the outer membrane of the cell. This is UDP-3-O-(3-hydroxymyristoyl)glucosamine N-acyltransferase from Photorhabdus laumondii subsp. laumondii (strain DSM 15139 / CIP 105565 / TT01) (Photorhabdus luminescens subsp. laumondii).